The following is a 74-amino-acid chain: Protein kish-B (74 aa).

Residues 1-22 (MTNVYSLDGLLVFALLFVCTCA) form the signal peptide. Topologically, residues 23-52 (YFRKVPRLRSWLLSEKKGVWGVFYKAAVIG) are extracellular. A helical transmembrane segment spans residues 53–73 (SRLHLAVSISCIAMAFYVLFI). K74 is a topological domain (cytoplasmic).

It belongs to the KISH family.

It is found in the golgi apparatus membrane. Involved in the early part of the secretory pathway. This is Protein kish-B (tmem167b) from Xenopus laevis (African clawed frog).